A 143-amino-acid polypeptide reads, in one-letter code: UPF0651 protein P31B10.02, mitochondrial (143 aa).

One can recognise an Oxidoreductase-like domain in the interval 48–93; that stretch reads IYDGIRVPPKPEEPLNCCQSGCAICVWDVYADDLEEYNRARRKAKR.

This sequence belongs to the UPF0651 family.

The protein resides in the mitochondrion. This Schizosaccharomyces pombe (strain 972 / ATCC 24843) (Fission yeast) protein is UPF0651 protein P31B10.02, mitochondrial.